The sequence spans 279 residues: Shikimate dehydrogenase (NADP(+)) (279 aa).

Residues 14–16 and T62 contribute to the shikimate site; that span reads SLS. The active-site Proton acceptor is the K66. Residues N87 and D103 each contribute to the shikimate site. NADP(+) is bound by residues 127-131, 151-156, and M215; these read GAGGA and NRTKAK. Y217 contacts shikimate. G239 contributes to the NADP(+) binding site.

It belongs to the shikimate dehydrogenase family. As to quaternary structure, homodimer.

It carries out the reaction shikimate + NADP(+) = 3-dehydroshikimate + NADPH + H(+). The protein operates within metabolic intermediate biosynthesis; chorismate biosynthesis; chorismate from D-erythrose 4-phosphate and phosphoenolpyruvate: step 4/7. In terms of biological role, involved in the biosynthesis of the chorismate, which leads to the biosynthesis of aromatic amino acids. Catalyzes the reversible NADPH linked reduction of 3-dehydroshikimate (DHSA) to yield shikimate (SA). This is Shikimate dehydrogenase (NADP(+)) from Alteromonas mediterranea (strain DSM 17117 / CIP 110805 / LMG 28347 / Deep ecotype).